The sequence spans 583 residues: Aspartate--tRNA ligase (583 aa).

E174 provides a ligand contact to L-aspartate. An aspartate region spans residues 198-201; it reads QITK. R220 is a binding site for L-aspartate. ATP-binding positions include 220-222 and Q229; that span reads RDE. Residue H443 participates in L-aspartate binding. E477 serves as a coordination point for ATP. L-aspartate is bound at residue R484. 529–532 is a binding site for ATP; it reads GLDR.

It belongs to the class-II aminoacyl-tRNA synthetase family. Type 1 subfamily. Homodimer.

Its subcellular location is the cytoplasm. It carries out the reaction tRNA(Asp) + L-aspartate + ATP = L-aspartyl-tRNA(Asp) + AMP + diphosphate. Functionally, catalyzes the attachment of L-aspartate to tRNA(Asp) in a two-step reaction: L-aspartate is first activated by ATP to form Asp-AMP and then transferred to the acceptor end of tRNA(Asp). The chain is Aspartate--tRNA ligase from Streptococcus agalactiae serotype Ia (strain ATCC 27591 / A909 / CDC SS700).